Consider the following 479-residue polypeptide: Inhibitory synaptic factor 2A (479 aa).

Serine 177 carries the post-translational modification Phosphoserine. Disordered regions lie at residues 226–247 (GRAK…ALRR) and 315–338 (SPEC…PSPT). Residues 228-237 (AKQDRGRPNS) show a composition bias toward basic and acidic residues. The span at 318–337 (CSEQPSQTHTPPGLGNQPSP) shows a compositional bias: polar residues. Residues 353 to 379 (TEVVDLKAQLQMMENLISSSQETIKVL) are a coiled coil. Over residues 449-461 (SPYSQETYSSTPK) the composition is skewed to polar residues. A disordered region spans residues 449–472 (SPYSQETYSSTPKQKSKTESKKHG).

The protein belongs to the INSYN2 family. In terms of assembly, interacts with GPHN.

It localises to the postsynaptic density. Its function is as follows. Component of the protein machinery at the inhibitory synapses, probably acting as a scaffold. Inhibitory synapses dampen neuronal activity through postsynaptic hyperpolarization. This synaptic inhibition is fundamental for the functioning of the central nervous system, shaping and orchestrating the flow of information through neuronal networks to generate a precise neural code. This chain is Inhibitory synaptic factor 2A, found in Homo sapiens (Human).